We begin with the raw amino-acid sequence, 29 residues long: Kalata-B11 (29 aa).

A cross-link (cyclopeptide (Gly-Asp)) is located at residues 1-29 (GLPVCGETCFGGTCNTPGCSCTDPICTRD). Intrachain disulfides connect C5–C19, C9–C21, and C14–C26.

In terms of processing, this is a cyclic peptide.

In terms of biological role, probably participates in a plant defense mechanism. This chain is Kalata-B11, found in Oldenlandia affinis.